Here is a 440-residue protein sequence, read N- to C-terminus: Chromosomal replication initiator protein DnaA (440 aa).

The tract at residues 1 to 74 (MNPSQILENL…VQSGNKAIIN (74 aa)) is domain I, interacts with DnaA modulators. A domain II region spans residues 74–99 (NIQAQSAKQSNKSTKIDIAHIKAQST). The domain III, AAA+ region stretch occupies residues 100-316 (ILNPSFTFDS…GIIISLNAYA (217 aa)). 4 residues coordinate ATP: glycine 146, glycine 148, lysine 149, and threonine 150. Positions 317–440 (TILGQEITLE…KNKILVKSQS (124 aa)) are domain IV, binds dsDNA.

Belongs to the DnaA family. Oligomerizes as a right-handed, spiral filament on DNA at oriC.

Its subcellular location is the cytoplasm. Plays an essential role in the initiation and regulation of chromosomal replication. ATP-DnaA binds to the origin of replication (oriC) to initiate formation of the DNA replication initiation complex once per cell cycle. Binds the DnaA box (a 9 base pair repeat at the origin) and separates the double-stranded (ds)DNA. Forms a right-handed helical filament on oriC DNA; dsDNA binds to the exterior of the filament while single-stranded (ss)DNA is stabiized in the filament's interior. The ATP-DnaA-oriC complex binds and stabilizes one strand of the AT-rich DNA unwinding element (DUE), permitting loading of DNA polymerase. After initiation quickly degrades to an ADP-DnaA complex that is not apt for DNA replication. Binds acidic phospholipids. This is Chromosomal replication initiator protein DnaA from Campylobacter jejuni (strain RM1221).